A 390-amino-acid chain; its full sequence is MWSGQPHPDEGHPPPLEAVPVPWKSVGPCKSHRESLGGLPETPAGEEAQGEEGPAATQLDVSRLRSSSMEIREKGSEFLKEELHKAQKELKLKDEECERLSKVREQLEQELEELTASLFEEAHKMVREANMKQAASEKQLKEARGKIDMLQAEVTALKTLVITSTPASPNRELHPQLLSPTKAGPRKGHLRHKSTSSALCPAVCPVAGHILTPDKEGKEVDTTLFAEFQAWRESPTLDKTSPFLERVYREDVGPCLDFTMQELSALVRAAVEDNTLTIEPVASQTLPAVKVAAVDCGHTNGFRAPIDTTCALSGLACACRHRIRLGDSESHYYISPSSRARITAVCNFFTYIRYIQQGLVRQDAEPMFWEITRLRKEMSLAKLGFFPHEA.

Residues 1-60 form a disordered region; the sequence is MWSGQPHPDEGHPPPLEAVPVPWKSVGPCKSHRESLGGLPETPAGEEAQGEEGPAATQLD. The span at 40 to 58 shows a compositional bias: low complexity; that stretch reads PETPAGEEAQGEEGPAATQ. Residues 73 to 161 adopt a coiled-coil conformation; that stretch reads EKGSEFLKEE…AEVTALKTLV (89 aa). Positions 166–194 are disordered; it reads PASPNRELHPQLLSPTKAGPRKGHLRHKS. A phosphoserine mark is found at Ser-168 and Ser-179. Basic residues predominate over residues 184 to 194; the sequence is GPRKGHLRHKS.

This sequence belongs to the SEC2 family. Interacts with RAB3A and IHPK1 through the coiled-coil domain. This interaction is competitive. IHPK1 kinase activity is not required for this interaction.

Its function is as follows. Guanine nucleotide exchange factor (GEF) which may activate RAB3A, a GTPase that regulates synaptic vesicle exocytosis. Promotes the exchange of GDP to GTP, converting inactive GDP-bound Rab proteins into their active GTP-bound form. May also activate RAB8A and RAB8B. In Bos taurus (Bovine), this protein is Guanine nucleotide exchange factor for Rab-3A (RAB3IL1).